Consider the following 209-residue polypeptide: Molybdenum cofactor guanylyltransferase (209 aa).

Residues 16–18 (LAG), Lys-28, Asn-56, Asp-69, and Asp-103 contribute to the GTP site. Asp-103 serves as a coordination point for Mg(2+).

This sequence belongs to the MobA family. As to quaternary structure, monomer. The cofactor is Mg(2+).

It localises to the cytoplasm. The catalysed reaction is Mo-molybdopterin + GTP + H(+) = Mo-molybdopterin guanine dinucleotide + diphosphate. Transfers a GMP moiety from GTP to Mo-molybdopterin (Mo-MPT) cofactor (Moco or molybdenum cofactor) to form Mo-molybdopterin guanine dinucleotide (Mo-MGD) cofactor. The sequence is that of Molybdenum cofactor guanylyltransferase from Rhizobium johnstonii (strain DSM 114642 / LMG 32736 / 3841) (Rhizobium leguminosarum bv. viciae).